The primary structure comprises 559 residues: Urocanate hydratase (559 aa).

NAD(+)-binding positions include 50–51 (GG), Gln128, 174–176 (GMG), Asp194, Arg199, 240–241 (NA), 261–265 (QTSAH), 271–272 (YI), and Tyr320. The active site involves Cys408. NAD(+) is bound at residue Gly490.

The protein belongs to the urocanase family. It depends on NAD(+) as a cofactor.

The protein localises to the cytoplasm. It carries out the reaction 4-imidazolone-5-propanoate = trans-urocanate + H2O. The protein operates within amino-acid degradation; L-histidine degradation into L-glutamate; N-formimidoyl-L-glutamate from L-histidine: step 2/3. Its function is as follows. Catalyzes the conversion of urocanate to 4-imidazolone-5-propionate. This Halalkalibacterium halodurans (strain ATCC BAA-125 / DSM 18197 / FERM 7344 / JCM 9153 / C-125) (Bacillus halodurans) protein is Urocanate hydratase.